Consider the following 421-residue polypeptide: MRKIGLAWQIFIGLILGIIVGAIFYGNPKVATYLQPIGDIFLRLIKMIVIPIVISSLVVGVASVGDLKKLGKLGGKTIIYFEIITTIAIVVGLLAANIFQPGTGVNMKSLEKTDIQSYVDTTNEVQHHSMVETFVNIVPKNIFESLTKGDMLPIIFFSVMFGLGVAAIGEKGKPVLQFFQGTAEAMFYVTNQIMKFAPFGVFALIGVTVSKFGVESLIPLSKLVIVVYATMVFFIFVVLGGVAKLFGINIFHIIKILKDELILAYSTASSETVLPKIMEKMENFGCPKAITSFVIPTGYSFNLDGSTLYQALAAIFIAQLYGIDMPISQQISLLLVLMVTSKGIAGVPGVSFVVLLATLGTVGIPIEGLAFIAGIDRILDMARTAVNVIGNSLAAIIMSKWEGQYNEEKGKQYIAQLQQSA.

Topologically, residues 1 to 3 (MRK) are cytoplasmic. The chain crosses the membrane as a helical span at residues 4-24 (IGLAWQIFIGLILGIIVGAIF). Residues 25–43 (YGNPKVATYLQPIGDIFLR) are Extracellular-facing. Residues 44 to 64 (LIKMIVIPIVISSLVVGVASV) form a helical membrane-spanning segment. Residues 65–77 (GDLKKLGKLGGKT) lie on the Cytoplasmic side of the membrane. The chain crosses the membrane as a helical span at residues 78–98 (IIYFEIITTIAIVVGLLAANI). At 99–148 (FQPGTGVNMKSLEKTDIQSYVDTTNEVQHHSMVETFVNIVPKNIFESLTK) the chain is on the extracellular side. The chain crosses the membrane as a helical span at residues 149-169 (GDMLPIIFFSVMFGLGVAAIG). Topologically, residues 170–198 (EKGKPVLQFFQGTAEAMFYVTNQIMKFAP) are cytoplasmic. A helical transmembrane segment spans residues 199 to 219 (FGVFALIGVTVSKFGVESLIP). The Extracellular portion of the chain corresponds to 220–222 (LSK). The helical transmembrane segment at 223–243 (LVIVVYATMVFFIFVVLGGVA) threads the bilayer. Lys-244 is a topological domain (cytoplasmic). A helical membrane pass occupies residues 245-265 (LFGINIFHIIKILKDELILAY). Over 266-306 (STASSETVLPKIMEKMENFGCPKAITSFVIPTGYSFNLDGS) the chain is Extracellular. The chain crosses the membrane as a helical span at residues 307-327 (TLYQALAAIFIAQLYGIDMPI). Topologically, residues 328 to 330 (SQQ) are cytoplasmic. Transmembrane regions (helical) follow at residues 331 to 351 (ISLL…PGVS) and 352 to 372 (FVVL…LAFI). Over 373-421 (AGIDRILDMARTAVNVIGNSLAAIIMSKWEGQYNEEKGKQYIAQLQQSA) the chain is Cytoplasmic.

This sequence belongs to the dicarboxylate/amino acid:cation symporter (DAACS) (TC 2.A.23) family. Homotrimer.

It localises to the cell membrane. In terms of biological role, this carrier protein is part of the Na(+)-dependent, binding-protein-independent glutamate-aspartate transport system. This Geobacillus stearothermophilus (Bacillus stearothermophilus) protein is Proton/sodium-glutamate symport protein (gltT).